Here is a 393-residue protein sequence, read N- to C-terminus: tRNA(Met) cytidine acetate ligase (393 aa).

Residues glycine 81, asparagine 142, and arginine 167 each coordinate ATP.

Belongs to the TmcAL family.

It is found in the cytoplasm. It catalyses the reaction cytidine(34) in elongator tRNA(Met) + acetate + ATP = N(4)-acetylcytidine(34) in elongator tRNA(Met) + AMP + diphosphate. Its function is as follows. Catalyzes the formation of N(4)-acetylcytidine (ac(4)C) at the wobble position of elongator tRNA(Met), using acetate and ATP as substrates. First activates an acetate ion to form acetyladenylate (Ac-AMP) and then transfers the acetyl group to tRNA to form ac(4)C34. This Bacillus cereus (strain ZK / E33L) protein is tRNA(Met) cytidine acetate ligase.